We begin with the raw amino-acid sequence, 130 residues long: Small ribosomal subunit protein uS8A (130 aa).

It belongs to the universal ribosomal protein uS8 family. In terms of assembly, component of the small ribosomal subunit (SSU). Mature ribosomes consist of a small (40S) and a large (60S) subunit. The 40S subunit contains about 32 different proteins and 1 molecule of RNA (18S). The 60S subunit contains 45 different proteins and 3 molecules of RNA (25S, 5.8S and 5S).

It localises to the cytoplasm. Its function is as follows. Component of the ribosome, a large ribonucleoprotein complex responsible for the synthesis of proteins in the cell. The small ribosomal subunit (SSU) binds messenger RNAs (mRNAs) and translates the encoded message by selecting cognate aminoacyl-transfer RNA (tRNA) molecules. The large subunit (LSU) contains the ribosomal catalytic site termed the peptidyl transferase center (PTC), which catalyzes the formation of peptide bonds, thereby polymerizing the amino acids delivered by tRNAs into a polypeptide chain. The nascent polypeptides leave the ribosome through a tunnel in the LSU and interact with protein factors that function in enzymatic processing, targeting, and the membrane insertion of nascent chains at the exit of the ribosomal tunnel. The polypeptide is Small ribosomal subunit protein uS8A (RPS22A) (Candida albicans (strain SC5314 / ATCC MYA-2876) (Yeast)).